The sequence spans 398 residues: Polyferredoxin protein VhuB (398 aa).

11 consecutive 4Fe-4S ferredoxin-type domains span residues 2–31, 25–53, 54–83, 82–111, 123–152, 152–181, 191–219, 220–249, 259–291, 300–331, and 339–368; these read AGIK…IAPF, AIEI…VENN, GKLI…VDDR, DRFP…IPGK, QEPI…IEDE, ELAV…VAGK, KSFT…YNRE, DLIV…LEVE, EGLV…MINQ, TKTD…MGKI, and NRIE…LTGD. Residues cysteine 11, cysteine 14, cysteine 17, cysteine 21, cysteine 34, cysteine 37, cysteine 40, cysteine 44, cysteine 63, cysteine 66, cysteine 69, cysteine 73, cysteine 91, cysteine 94, cysteine 97, cysteine 101, cysteine 132, cysteine 135, cysteine 138, cysteine 142, cysteine 161, cysteine 164, cysteine 167, cysteine 171, cysteine 199, cysteine 202, cysteine 205, cysteine 209, cysteine 229, cysteine 232, cysteine 235, cysteine 239, cysteine 268, cysteine 271, cysteine 274, cysteine 278, cysteine 311, cysteine 314, cysteine 317, cysteine 321, cysteine 348, cysteine 351, cysteine 354, cysteine 358, cysteine 377, cysteine 380, cysteine 383, and cysteine 387 each contribute to the [4Fe-4S] cluster site.

It depends on [4Fe-4S] cluster as a cofactor.

The polypeptide is Polyferredoxin protein VhuB (vhuB) (Methanococcus voltae).